The sequence spans 433 residues: MYVCGPTVYDTAHIGNARSIVVYDVLFQLLKFCYGKATYVRNITDIDDKIINAANEKDSSIESISTYYTRAFHEDMRSINCVEPTHEPKAAENIKYIIELIEYLLQSGHAYESNKHIYFSIESYPEYGALSGKKIDELEHGSRVEVGENKKHPGDFVLWKPANDTDYKLSSYWNSPWGEGRPGWHIECSAMSYAYLGKDFDIHGGGIDLQFPHHENEIAQNKSAFAGSMFAKYWVHNGSLTVNKEKMSKSLFNIVKVRDLLDSGIKGEVIRYALFKTHYRKPLDWTESVISESQETLNKFYRLLRGIDVASIEKSDVEVSRDFIETLKNDLNIPEALAILHEMATKINKTNNENEKLKLTESFIKSARFIGLLESSYQEWFTAGISYQEIKRLIDLRKVAKQNKDYDAADKIRDQLKQMGVTISDNEDGTTTW.

Zn(2+) is bound at residue Cys-4. A 'HIGH' region motif is present at residues 6–16 (PTVYDTAHIGN). Cys-188, His-213, and Glu-217 together coordinate Zn(2+). The 'KMSKS' region signature appears at 246-250 (KMSKS). Lys-249 is a binding site for ATP.

It belongs to the class-I aminoacyl-tRNA synthetase family. As to quaternary structure, monomer. Requires Zn(2+) as cofactor.

Its subcellular location is the cytoplasm. The enzyme catalyses tRNA(Cys) + L-cysteine + ATP = L-cysteinyl-tRNA(Cys) + AMP + diphosphate. The protein is Cysteine--tRNA ligase of Wolbachia sp. subsp. Brugia malayi (strain TRS).